We begin with the raw amino-acid sequence, 214 residues long: Ribosomal RNA small subunit methyltransferase G (214 aa).

Residues G73, L78, 124-125 (VE), and R139 contribute to the S-adenosyl-L-methionine site.

It belongs to the methyltransferase superfamily. RNA methyltransferase RsmG family.

It is found in the cytoplasm. The enzyme catalyses guanosine(527) in 16S rRNA + S-adenosyl-L-methionine = N(7)-methylguanosine(527) in 16S rRNA + S-adenosyl-L-homocysteine. In terms of biological role, specifically methylates the N7 position of guanine in position 527 of 16S rRNA. This chain is Ribosomal RNA small subunit methyltransferase G, found in Aeromonas hydrophila subsp. hydrophila (strain ATCC 7966 / DSM 30187 / BCRC 13018 / CCUG 14551 / JCM 1027 / KCTC 2358 / NCIMB 9240 / NCTC 8049).